Consider the following 339-residue polypeptide: MAKIAVLGNGSWGSVLGSMLADNGNDVVLYGNIDSVNQEINEHHTNTHYMKNWKLNPNVPATGDLEKALDGAEIILFVLPTKAVRIVAKNARKILDKTGATPLLVTATKGIEPGSKKLISDILTEEVYPNDSEKIVAISGPSHAENVAQKDLTAIACASTSEENAKRVQKIFSNNYVRFYTNDDLVGVEVGGAVKNVIAIAAGILVGKGYGDDAKAALMTRGLAEITRLGVKYFGAKPMTFSGLSGIGDLIVTATSQNSRNWRAGKQIGEGKSLDYVLDHMGQVVEGATTVKAVHELAEEKNIDMPISEAIYRVLYENADVDQEIKTMMGRNPKPEIQL.

3 residues coordinate NADPH: S11, W12, and K109. Residues K109, G140, and S142 each contribute to the sn-glycerol 3-phosphate site. NADPH is bound at residue A144. K195, D249, S259, R260, and N261 together coordinate sn-glycerol 3-phosphate. K195 functions as the Proton acceptor in the catalytic mechanism. Residue R260 participates in NADPH binding. NADPH-binding residues include V284 and E286.

Belongs to the NAD-dependent glycerol-3-phosphate dehydrogenase family.

It is found in the cytoplasm. The enzyme catalyses sn-glycerol 3-phosphate + NAD(+) = dihydroxyacetone phosphate + NADH + H(+). The catalysed reaction is sn-glycerol 3-phosphate + NADP(+) = dihydroxyacetone phosphate + NADPH + H(+). It participates in membrane lipid metabolism; glycerophospholipid metabolism. Functionally, catalyzes the reduction of the glycolytic intermediate dihydroxyacetone phosphate (DHAP) to sn-glycerol 3-phosphate (G3P), the key precursor for phospholipid synthesis. This chain is Glycerol-3-phosphate dehydrogenase [NAD(P)+], found in Lactobacillus johnsonii (strain CNCM I-12250 / La1 / NCC 533).